The sequence spans 553 residues: Cytokine-like nuclear factor N-PAC (553 aa).

Residues 8-66 (LGDLVWGKLGRYPPWPGKIVNPPKDLKKPRGKKCFFVKFFGTEDHAWIKVEQLKPYHAH) form the PWWP domain. 2 stretches are compositionally biased toward basic and acidic residues: residues 92–145 (RAKG…EGKK) and 162–182 (RAQE…KDLT). The segment at 92 to 188 (RAKGKDQTSS…KDLTIPESST (97 aa)) is disordered. Ser130 carries the phosphoserine modification. Residue Lys135 forms a Glycyl lysine isopeptide (Lys-Gly) (interchain with G-Cter in SUMO2) linkage. Phosphoserine is present on Ser167. Residues 168 to 180 (PRKRGRPPKDEKD) constitute a DNA-binding region (a.T hook). Glycyl lysine isopeptide (Lys-Gly) (interchain with G-Cter in SUMO2) cross-links involve residues Lys176, Lys179, Lys201, and Lys211. Residues 214–217 (DPHF) are interaction with histone H3. Residues 216–225 (HFHHFLLSQT) are interaction with KDM1B. Residues Lys227, Lys237, Lys240, and Lys269 each participate in a glycyl lysine isopeptide (Lys-Gly) (interchain with G-Cter in SUMO2) cross-link. The interval 261–553 (GSITPTDKKI…MSAVYRAYIH (293 aa)) is dehydrogenase domain. 271–285 (GFLGLGLMGSGIVSN) provides a ligand contact to NAD(+). A Glycyl lysine isopeptide (Lys-Gly) (interchain with G-Cter in SUMO2) cross-link involves residue Lys302. 2 residues coordinate NAD(+): Thr362 and Lys505. Ser540 bears the Phosphoserine mark.

This sequence belongs to the HIBADH-related family. NP60 subfamily. As to quaternary structure, homotetramere. Interacts with MAPK14. Interacts with KDM1B at nucleosomes; this interaction stimulates H3K4me1 and H3K4me2 demethylation. Binds to mononucleosomes. Interacts with GATA4; the interaction is required for a synergistic activation of GATA4 target genes transcription.

Its subcellular location is the nucleus. It is found in the chromosome. In terms of biological role, cytokine-like nuclear factor with chromatin gene reader activity involved in chromatin modification and regulation of gene expression. Acts as a nucleosome-destabilizing factor that is recruited to genes during transcriptional activation. Recognizes and binds histone H3 without a preference for specific epigenetic markers and also binds DNA. Interacts with KDM1B and promotes its histone demethylase activity by facilitating the capture of H3 tails, they form a multifunctional enzyme complex that modifies transcribed chromatin and facilitates Pol II transcription through nucleosomes. Stimulates the acetylation of 'Lys-56' of nucleosomal histone H3 (H3K56ac) by EP300. With GATA4, co-binds a defined set of heart development genes and coregulates their expression during cardiomyocyte differentiation. Regulates p38 MAP kinase activity by mediating stress activation of MAPK14/p38alpha and specifically regulating MAPK14 signaling. Indirectly promotes phosphorylation of MAPK14 and activation of ATF2. The phosphorylation of MAPK14 requires upstream activity of MAP2K4 and MAP2K6. The protein is Cytokine-like nuclear factor N-PAC of Homo sapiens (Human).